Here is a 134-residue protein sequence, read N- to C-terminus: Profilin-3 (134 aa).

The cysteines at positions 13 and 118 are disulfide-linked. An Involved in PIP2 interaction motif is present at residues 84–100; sequence AVIRGKKGSGGITIKKT. Thr-114 is subject to Phosphothreonine.

It belongs to the profilin family. Occurs in many kinds of cells as a complex with monomeric actin in a 1:1 ratio. In terms of processing, phosphorylated by MAP kinases.

The protein resides in the cytoplasm. Its subcellular location is the cytoskeleton. Its function is as follows. Binds to actin and affects the structure of the cytoskeleton. At high concentrations, profilin prevents the polymerization of actin, whereas it enhances it at low concentrations. This chain is Profilin-3, found in Olea europaea (Common olive).